The primary structure comprises 1159 residues: ATP-dependent helicase/deoxyribonuclease subunit B (1159 aa).

8-15 (GRAGSGKT) contacts ATP. Positions 784, 1102, 1105, and 1111 each coordinate [4Fe-4S] cluster. The interval 1140 to 1159 (VKEDGSQVDGRTEGSDNNEG) is disordered.

It belongs to the helicase family. AddB/RexB type 1 subfamily. In terms of assembly, heterodimer of AddA and AddB. Mg(2+) is required as a cofactor. It depends on [4Fe-4S] cluster as a cofactor.

Its function is as follows. The heterodimer acts as both an ATP-dependent DNA helicase and an ATP-dependent, dual-direction single-stranded exonuclease. Recognizes the chi site generating a DNA molecule suitable for the initiation of homologous recombination. The AddB subunit has 5' -&gt; 3' nuclease activity but not helicase activity. This is ATP-dependent helicase/deoxyribonuclease subunit B from Caldanaerobacter subterraneus subsp. tengcongensis (strain DSM 15242 / JCM 11007 / NBRC 100824 / MB4) (Thermoanaerobacter tengcongensis).